A 257-amino-acid chain; its full sequence is Acetylglutamate kinase (257 aa).

Residues 43 to 44 (GG), Arg65, and Asn157 each bind substrate.

It belongs to the acetylglutamate kinase family. ArgB subfamily.

It is found in the cytoplasm. The enzyme catalyses N-acetyl-L-glutamate + ATP = N-acetyl-L-glutamyl 5-phosphate + ADP. It functions in the pathway amino-acid biosynthesis; L-arginine biosynthesis; N(2)-acetyl-L-ornithine from L-glutamate: step 2/4. Functionally, catalyzes the ATP-dependent phosphorylation of N-acetyl-L-glutamate. This is Acetylglutamate kinase from Mannheimia succiniciproducens (strain KCTC 0769BP / MBEL55E).